The sequence spans 399 residues: Tryptophan synthase beta chain (399 aa).

The residue at position 92 (lysine 92) is an N6-(pyridoxal phosphate)lysine.

It belongs to the TrpB family. In terms of assembly, tetramer of two alpha and two beta chains. It depends on pyridoxal 5'-phosphate as a cofactor.

It carries out the reaction (1S,2R)-1-C-(indol-3-yl)glycerol 3-phosphate + L-serine = D-glyceraldehyde 3-phosphate + L-tryptophan + H2O. The protein operates within amino-acid biosynthesis; L-tryptophan biosynthesis; L-tryptophan from chorismate: step 5/5. Functionally, the beta subunit is responsible for the synthesis of L-tryptophan from indole and L-serine. In Legionella pneumophila subsp. pneumophila (strain Philadelphia 1 / ATCC 33152 / DSM 7513), this protein is Tryptophan synthase beta chain.